A 404-amino-acid polypeptide reads, in one-letter code: Probable ribosomal oxygenase HI_0396 (404 aa).

The region spanning 102–231 is the JmjC domain; sequence ELGQLWNKFG…LIDGISKGFC (130 aa). Positions 135, 137, and 199 each coordinate Fe cation.

Belongs to the ROX family. Fe(2+) serves as cofactor.

In terms of biological role, oxygenase that catalyzes the hydroxylation of a ribosomal protein. The chain is Probable ribosomal oxygenase HI_0396 from Haemophilus influenzae (strain ATCC 51907 / DSM 11121 / KW20 / Rd).